The sequence spans 465 residues: Protein hedgehog (465 aa).

The N-palmitoyl cysteine moiety is linked to residue Cys-79. Ca(2+) contacts are provided by Glu-143, Glu-144, Asp-149, Thr-179, Glu-180, Asp-183, and Asp-185. Gly-251 carries Cholesterol glycine ester lipidation.

The protein belongs to the hedgehog family. In terms of assembly, interacts with shf. The C-terminal part of the hedgehog protein precursor displays an autoproteolysis activity that results in the cleavage of the full-length protein into two parts (N-product and C-product). In addition, the C-terminal part displays a cholesterol transferase activity that results by the covalent attachment of a cholesterol moiety to the C-terminal of the newly generated N-product. The N-product is the active species in both local and long-range signaling, whereas the C-product has no signaling activity. In terms of processing, cholesterylation is required for N-product targeting to lipid rafts and multimerization. Post-translationally, N-palmitoylation by Rasp of the hedgehog N-product, within the secretory pathway, is required for the embryonic and larval patterning activities of the hedgehog signal.

It localises to the nucleus. Its subcellular location is the cytoplasm. The protein resides in the cell membrane. The catalysed reaction is glycyl-L-cysteinyl-[protein] + cholesterol + H(+) = [protein]-C-terminal glycyl cholesterol ester + N-terminal L-cysteinyl-[protein]. In terms of biological role, the C-terminal part of the hedgehog protein precursor displays an autoproteolysis activity that results in the cleavage of the full-length protein into two parts (N-product and C-product). In addition, the C-terminal part displays a cholesterol transferase activity that results by the covalent attachment of a cholesterol moiety to the C-terminal of the newly generated N-product. Once cleaved, the C-product has no signaling activity and diffuses from the cell. Functionally, the dually lipidated hedgehog protein N-product is a morphogen which is essential for a variety of patterning events during development. Establishes the anterior-posterior axis of the embryonic segments and patterns the larval imaginal disks. Binds to the patched (ptc) receptor, which functions in association with smoothened (smo), to activate the transcription of target genes wingless (wg), decapentaplegic (dpp) and ptc. In the absence of hh, ptc represses the constitutive signaling activity of smo through fused (fu). Essential component of a signaling pathway which regulates the Duox-dependent gut immune response to bacterial uracil; required to activate Cad99C-dependent endosome formation, norpA-dependent Ca2+ mobilization and p38 MAPK, which are essential steps in the Duox-dependent production of reactive oxygen species (ROS) in response to intestinal bacterial infection. During photoreceptor differentiation, it up-regulates transcription of Ubr3, which in turn promotes the hh-signaling pathway by mediating the ubiquitination and degradation of cos. The protein is Protein hedgehog of Drosophila sechellia (Fruit fly).